Consider the following 162-residue polypeptide: SsrA-binding protein (162 aa).

This sequence belongs to the SmpB family.

The protein localises to the cytoplasm. Functionally, required for rescue of stalled ribosomes mediated by trans-translation. Binds to transfer-messenger RNA (tmRNA), required for stable association of tmRNA with ribosomes. tmRNA and SmpB together mimic tRNA shape, replacing the anticodon stem-loop with SmpB. tmRNA is encoded by the ssrA gene; the 2 termini fold to resemble tRNA(Ala) and it encodes a 'tag peptide', a short internal open reading frame. During trans-translation Ala-aminoacylated tmRNA acts like a tRNA, entering the A-site of stalled ribosomes, displacing the stalled mRNA. The ribosome then switches to translate the ORF on the tmRNA; the nascent peptide is terminated with the 'tag peptide' encoded by the tmRNA and targeted for degradation. The ribosome is freed to recommence translation, which seems to be the essential function of trans-translation. The chain is SsrA-binding protein from Buchnera aphidicola subsp. Acyrthosiphon pisum (strain 5A).